A 631-amino-acid polypeptide reads, in one-letter code: Nucleoside triphosphatase I (631 aa).

Residues 42 to 204 form the Helicase ATP-binding domain; sequence FLGLDTMHSI…TMIVNLLRPK (163 aa). Position 55-62 (55-62) interacts with ATP; sequence HDTGVGKT. Positions 141–144 match the DEXH box motif; that stretch reads DECH. A Helicase C-terminal domain is found at 367-536; sequence KFTEVCLKIL…LFKVFKESSI (170 aa). The binding to the cap-specific mRNA (nucleoside-2'-O-)-methyltransferase stretch occupies residues 457–524; sequence DIFILDMTWN…NIIKTKSKEF (68 aa).

This sequence belongs to the helicase family. NPH I subfamily. As to quaternary structure, monomer. Interacts (via C-terminus) with RAP94 (via N-terminus). Interacts with the cap-specific mRNA (nucleoside-2'-O-)-methyltransferase.

The protein resides in the virion. It catalyses the reaction a ribonucleoside 5'-triphosphate + H2O = a ribonucleoside 5'-diphosphate + phosphate + H(+). Functionally, DNA-dependent ATPase required for providing the needed energy to achieve the termination of early transcripts. Acts in concert with the RAP94 subunit of the virion RNA polymerase and the capping enzyme/VTF to catalyze release of UUUUUNU-containing nascent RNA from the elongation complex. NPH-I must bind ssDNA in order to exhibit ATPase activity. This chain is Nucleoside triphosphatase I (NPH1), found in Erythrocebus patas (Red guenon).